Reading from the N-terminus, the 561-residue chain is Carbohydrate sulfotransferase 15 (561 aa).

The Cytoplasmic portion of the chain corresponds to 1 to 80 (MRHCINCCIQ…FLRFRKGKRC (80 aa)). A helical; Signal-anchor for type II membrane protein transmembrane segment spans residues 81-101 (SLVFGLIIMTLVMASYILSGA). The Lumenal portion of the chain corresponds to 102–561 (HQELLISSPF…DDEAFAWKTT (460 aa)). 263–267 (KCGTT) provides a ligand contact to 3'-phosphoadenylyl sulfate. A glycan (N-linked (GlcNAc...) asparagine) is linked at Asn364. 3'-phosphoadenylyl sulfate-binding residues include Arg392 and Ser400.

This sequence belongs to the sulfotransferase 1 family. As to quaternary structure, homodimer; disulfide-linked (Potential). The relevance of homodimerization is however unsure. May interact with phosphorylated proteins in resting B-cells, including HCK. The cofactor is a divalent metal cation. It depends on glutathione as a cofactor. In terms of processing, glycosylated.

It is found in the golgi apparatus membrane. The catalysed reaction is dermatan 4'-sulfate + n 3'-phosphoadenylyl sulfate = dermatan 4',6'-bissulfate + n adenosine 3',5'-bisphosphate + n H(+). It catalyses the reaction chondroitin 4'-sulfate + n 3'-phosphoadenylyl sulfate = chondroitin 4',6'-bissulfate + n adenosine 3',5'-bisphosphate + n H(+). With respect to regulation, inhibited by phenyl beta-GalNAc(4,6-SO(4)). Functionally, sulfotransferase that transfers sulfate from 3'-phosphoadenosine 5'-phosphosulfate (PAPS) to the C-6 hydroxyl group of the GalNAc 4-sulfate residue of chondroitin sulfate A and forms chondroitin sulfate E containing GlcA-GalNAc(4,6-SO(4)) repeating units. It also transfers sulfate to a unique non-reducing terminal sequence, GalNAc(4SO4)-GlcA(2SO4)-GalNAc(6SO4), to yield a highly sulfated structure similar to the structure found in thrombomodulin chondroitin sulfate. May also act as a B-cell receptor involved in BCR ligation-mediated early activation that mediate regulatory signals key to B-cell development and/or regulation of B-cell-specific RAG expression; however such results are unclear in vivo. The chain is Carbohydrate sulfotransferase 15 (Chst15) from Rattus norvegicus (Rat).